Consider the following 120-residue polypeptide: Large ribosomal subunit protein bL19 (120 aa).

It belongs to the bacterial ribosomal protein bL19 family.

In terms of biological role, this protein is located at the 30S-50S ribosomal subunit interface and may play a role in the structure and function of the aminoacyl-tRNA binding site. This is Large ribosomal subunit protein bL19 from Dichelobacter nodosus (strain VCS1703A).